The primary structure comprises 105 residues: Early E3A 12.1 kDa protein (105 aa).

It belongs to the adenoviridae E3A-2 family.

Functionally, not yet known. The chain is Early E3A 12.1 kDa protein from Human adenovirus A serotype 12 (HAdV-12).